The following is a 1358-amino-acid chain: DNA-directed RNA polymerase subunit beta (1358 aa).

This sequence belongs to the RNA polymerase beta chain family. As to quaternary structure, the RNAP catalytic core consists of 2 alpha, 1 beta, 1 beta' and 1 omega subunit. When a sigma factor is associated with the core the holoenzyme is formed, which can initiate transcription.

It carries out the reaction RNA(n) + a ribonucleoside 5'-triphosphate = RNA(n+1) + diphosphate. In terms of biological role, DNA-dependent RNA polymerase catalyzes the transcription of DNA into RNA using the four ribonucleoside triphosphates as substrates. This Francisella tularensis subsp. novicida (strain U112) protein is DNA-directed RNA polymerase subunit beta.